The primary structure comprises 609 residues: Glutamine--fructose-6-phosphate aminotransferase [isomerizing] (609 aa).

Cysteine 2 acts as the Nucleophile; for GATase activity in catalysis. One can recognise a Glutamine amidotransferase type-2 domain in the interval 2–218; sequence CGIVGAVAQR…EGDVAEVTRR (217 aa). 2 SIS domains span residues 286–426 and 458–599; these read AAEF…HNGM and LAED…VDQP. Lysine 604 serves as the catalytic For Fru-6P isomerization activity.

Homodimer.

The protein resides in the cytoplasm. It carries out the reaction D-fructose 6-phosphate + L-glutamine = D-glucosamine 6-phosphate + L-glutamate. In terms of biological role, catalyzes the first step in hexosamine metabolism, converting fructose-6P into glucosamine-6P using glutamine as a nitrogen source. The chain is Glutamine--fructose-6-phosphate aminotransferase [isomerizing] from Shewanella oneidensis (strain ATCC 700550 / JCM 31522 / CIP 106686 / LMG 19005 / NCIMB 14063 / MR-1).